The following is a 197-amino-acid chain: MATLLRIDSSASGENSKSRQLANEFVEKWLAKNPEGKVVARDVTANPLPHFTGETLGALFTPEENRTAEQQAIVAIGDELIAELEAADLVIVSAPMYNFGIPSTLKSYFDHVARAGRTFKYTETGPVGLVNKDAYIFAASGSFLAGAPVDHQVPHIQTFLGFIGLNVKDTFIAGGQAMGEPGEDAFNQAKSQIAVAV.

Residues S10, 16–18 (SKS), and 96–99 (MYNF) contribute to the FMN site.

Belongs to the azoreductase type 1 family. Homodimer. It depends on FMN as a cofactor.

The enzyme catalyses 2 a quinone + NADH + H(+) = 2 a 1,4-benzosemiquinone + NAD(+). The catalysed reaction is N,N-dimethyl-1,4-phenylenediamine + anthranilate + 2 NAD(+) = 2-(4-dimethylaminophenyl)diazenylbenzoate + 2 NADH + 2 H(+). Quinone reductase that provides resistance to thiol-specific stress caused by electrophilic quinones. Functionally, also exhibits azoreductase activity. Catalyzes the reductive cleavage of the azo bond in aromatic azo compounds to the corresponding amines. The protein is FMN-dependent NADH:quinone oxidoreductase of Marinomonas sp. (strain MWYL1).